The sequence spans 578 residues: Probable cytochrome c oxidase subunit 1-alpha (578 aa).

Residues 1 to 21 form a disordered region; that stretch reads MSILNEPQGASAAEDSYENEL. A helical membrane pass occupies residues 44 to 64; the sequence is IGTMYLVTSFAFFVIGGVMAL. Residue His-90 coordinates Fe(II)-heme a. Transmembrane regions (helical) follow at residues 93 to 113, 125 to 145, 174 to 194, 217 to 237, 262 to 282, and 294 to 314; these read IMLL…IMPL, LNMF…GGFL, LWIM…VNFI, VLLT…ALFA, LFWF…FGIV, and IFGY…SVTV. The Cu cation site is built by His-268 and Tyr-272. The 1'-histidyl-3'-tyrosine (His-Tyr) cross-link spans 268–272; the sequence is HPEVY. Residues His-317 and His-318 each coordinate Cu cation. 2 helical membrane passes run 319 to 339 and 363 to 383; these read MYVT…LIAV and MLWS…GVIL. His-401 serves as a coordination point for heme a3. Transmembrane regions (helical) follow at residues 402–422, 437–457, and 480–500; these read FHYV…HFWW, ITFW…HWLG, and ISTI…YNIW. His-403 is a binding site for Fe(II)-heme a.

The protein belongs to the heme-copper respiratory oxidase family. In terms of assembly, associates with subunits II, III and IV to form cytochrome c oxidase. Cu(2+) is required as a cofactor. Requires heme as cofactor.

The protein resides in the cell membrane. It carries out the reaction 4 Fe(II)-[cytochrome c] + O2 + 8 H(+)(in) = 4 Fe(III)-[cytochrome c] + 2 H2O + 4 H(+)(out). It functions in the pathway energy metabolism; oxidative phosphorylation. In terms of biological role, cytochrome c oxidase is the component of the respiratory chain that catalyzes the reduction of oxygen to water. Subunits 1-3 form the functional core of the enzyme complex. CO I is the catalytic subunit of the enzyme. Electrons originating in cytochrome c are transferred via the copper A center of subunit 2 and heme A of subunit 1 to the bimetallic center formed by heme A3 and copper B. The polypeptide is Probable cytochrome c oxidase subunit 1-alpha (ctaD1) (Streptomyces coelicolor (strain ATCC BAA-471 / A3(2) / M145)).